Consider the following 180-residue polypeptide: Protein PHLOEM PROTEIN 2-LIKE A9 (180 aa).

The segment at 1 to 21 (MSSQKSSHHKADSKMEQDNNR) is disordered. Over residues 9–21 (HKADSKMEQDNNR) the composition is skewed to basic and acidic residues.

This is Protein PHLOEM PROTEIN 2-LIKE A9 (PP2A9) from Arabidopsis thaliana (Mouse-ear cress).